A 314-amino-acid chain; its full sequence is Putative S-adenosyl-L-methionine-dependent methyltransferase MAB_3886c (314 aa).

S-adenosyl-L-methionine-binding positions include aspartate 133 and 162–163 (DL).

The protein belongs to the UPF0677 family.

Functionally, exhibits S-adenosyl-L-methionine-dependent methyltransferase activity. The protein is Putative S-adenosyl-L-methionine-dependent methyltransferase MAB_3886c of Mycobacteroides abscessus (strain ATCC 19977 / DSM 44196 / CCUG 20993 / CIP 104536 / JCM 13569 / NCTC 13031 / TMC 1543 / L948) (Mycobacterium abscessus).